The sequence spans 142 residues: Large ribosomal subunit protein uL11 (142 aa).

The tract at residues 84–103 (AGVKSGSGRPNSDKVGTVTD) is disordered.

The protein belongs to the universal ribosomal protein uL11 family. As to quaternary structure, part of the ribosomal stalk of the 50S ribosomal subunit. Interacts with L10 and the large rRNA to form the base of the stalk. L10 forms an elongated spine to which L12 dimers bind in a sequential fashion forming a multimeric L10(L12)X complex. One or more lysine residues are methylated.

In terms of biological role, forms part of the ribosomal stalk which helps the ribosome interact with GTP-bound translation factors. This chain is Large ribosomal subunit protein uL11, found in Aliivibrio salmonicida (strain LFI1238) (Vibrio salmonicida (strain LFI1238)).